The chain runs to 236 residues: MLTRKQFELLKFINERLKEAGVPPSFDEMKDALDLRSKSGIHRLITALEERGFIRRLPNRARAIEVIKLPDTGGMPGNSRRGFTPSVIEGNLGKVRPPSPTPAEDDHDRGSVAVPVMGRIAAGTPIEALQSRSHTISVPADMLGSGEHYALEVRGDSMVEAGILDGDMALIQKNDVADTGDIVVALIDEEEATLKRFRRRGASIALEPANAAYEVRILPPNRVRIQGKLIGLYRKY.

The H-T-H motif DNA-binding region spans phenylalanine 26–threonine 46. The segment at proline 85–arginine 109 is disordered. Catalysis depends on for autocatalytic cleavage activity residues serine 157 and lysine 195.

Belongs to the peptidase S24 family. As to quaternary structure, homodimer.

The enzyme catalyses Hydrolysis of Ala-|-Gly bond in repressor LexA.. Functionally, represses a number of genes involved in the response to DNA damage (SOS response), including recA and lexA. In the presence of single-stranded DNA, RecA interacts with LexA causing an autocatalytic cleavage which disrupts the DNA-binding part of LexA, leading to derepression of the SOS regulon and eventually DNA repair. This Rhodopseudomonas palustris (strain ATCC BAA-98 / CGA009) protein is LexA repressor.